Reading from the N-terminus, the 280-residue chain is Urease accessory protein UreD 1 (280 aa).

It belongs to the UreD family. As to quaternary structure, ureD, UreF and UreG form a complex that acts as a GTP-hydrolysis-dependent molecular chaperone, activating the urease apoprotein by helping to assemble the nickel containing metallocenter of UreC. The UreE protein probably delivers the nickel.

Its subcellular location is the cytoplasm. Functionally, required for maturation of urease via the functional incorporation of the urease nickel metallocenter. The protein is Urease accessory protein UreD 1 of Brucella canis (strain ATCC 23365 / NCTC 10854 / RM-666).